We begin with the raw amino-acid sequence, 920 residues long: MKEYKDTLNLNTTTFSMKGNLSVNEPKTYAKWQEQQAFKRMQNRKDNHGDFTLHDGPPYANGHLHLGHALNKILKDIVIKREYFKGNKIYYTPGWDCHGLPIEQQILERLEKEKTSLENPTLFREKCRDHAKKFLEIQKNEFLQLGVLGDFEDPYKTMDFKFEASIYRALVEVAKKGLLKERHKPIYWSYACESALAEAEVEYKMKKSPSIFVAFGLKKESLEKLKVKKASLVIWTTTPWTLYANVAIALKKDALYALTQKGYLVAKVLHEKLAALGVVDSEIAHEFNANDLEYLKATNPLNQRDSLITLGEHVGLEDGTGAVHTAPGHGEEDYYLGLKYNLEVLMSVDEKGCYNEGIIHKKLLDESYLGEHVFKAQKRIIEQLGDSLLLEQEIEHSYPHCWRTHKPVIYRATTQWFILMDEPFIQNDGSQKTLREVALNAIEKVEFVPSSGKNRLKTMIENRPDWCLSRQRKWGVPLAFFIDKRTNKPCFESEVLEHVANLFEKKGCDVWWESSVKDLLPPSYQEDSKHYEKVMHILDVWFDSGSTFKAVLEDYYGEKGQSPSDVILEGSDQHRGWFQSSLLIGCVLNNQAPFKKVITHGFIVDEKGEKMSKSKGNVVSLDNLLKKHGSDVVRLWVAFNDYQNDLRVSQTFFIQTEQHYKKFRNTLKFLLANFSDMDLKDLERSHNFSPLDHFILETLETTSTGVNSAFEEHDFVKGLNILMAFVTNELSGIYLDACKDSLYCDSKNNKKRQAIQMVLLAVASQLCYFLAPILTHTIEEVLEHSQVLCAFLQAKDVFDLKGINILEKLRLKEFKKPENFEAVLALRSAFNEELDRLKKEGVIKNSLECAIEVKEKALRENLVEELLMVSFVGVAKEKISETPAFTLFKAPFYKCPRCWRFKSELENTPCKRCEEVLKER.

A 'HIGH' region motif is present at residues 58-68 (PYANGHLHLGH). Glu-569 contacts L-isoleucyl-5'-AMP. The short motif at 610–614 (KMSKS) is the 'KMSKS' region element. Lys-613 lines the ATP pocket. Zn(2+)-binding residues include Cys-895, Cys-898, Cys-910, and Cys-913.

This sequence belongs to the class-I aminoacyl-tRNA synthetase family. IleS type 1 subfamily. As to quaternary structure, monomer. The cofactor is Zn(2+).

The protein resides in the cytoplasm. The catalysed reaction is tRNA(Ile) + L-isoleucine + ATP = L-isoleucyl-tRNA(Ile) + AMP + diphosphate. Catalyzes the attachment of isoleucine to tRNA(Ile). As IleRS can inadvertently accommodate and process structurally similar amino acids such as valine, to avoid such errors it has two additional distinct tRNA(Ile)-dependent editing activities. One activity is designated as 'pretransfer' editing and involves the hydrolysis of activated Val-AMP. The other activity is designated 'posttransfer' editing and involves deacylation of mischarged Val-tRNA(Ile). This is Isoleucine--tRNA ligase from Helicobacter pylori (strain G27).